A 369-amino-acid polypeptide reads, in one-letter code: Geranylgeranyl pyrophosphate synthase, chloroplastic (369 aa).

Residues lysine 118, arginine 121, and histidine 150 each contribute to the isopentenyl diphosphate site. Positions 157 and 163 each coordinate Mg(2+). Arginine 168 is a dimethylallyl diphosphate binding site. Residue arginine 169 participates in isopentenyl diphosphate binding. Positions 254, 255, 292, 309, and 319 each coordinate dimethylallyl diphosphate.

The protein belongs to the FPP/GGPP synthase family. Monomer. It depends on Mg(2+) as a cofactor.

The protein resides in the plastid. The protein localises to the chloroplast. The enzyme catalyses isopentenyl diphosphate + dimethylallyl diphosphate = (2E)-geranyl diphosphate + diphosphate. The catalysed reaction is isopentenyl diphosphate + (2E)-geranyl diphosphate = (2E,6E)-farnesyl diphosphate + diphosphate. It catalyses the reaction isopentenyl diphosphate + (2E,6E)-farnesyl diphosphate = (2E,6E,10E)-geranylgeranyl diphosphate + diphosphate. The protein operates within isoprenoid biosynthesis; farnesyl diphosphate biosynthesis; farnesyl diphosphate from geranyl diphosphate and isopentenyl diphosphate: step 1/1. It participates in isoprenoid biosynthesis; geranyl diphosphate biosynthesis; geranyl diphosphate from dimethylallyl diphosphate and isopentenyl diphosphate: step 1/1. It functions in the pathway isoprenoid biosynthesis; geranylgeranyl diphosphate biosynthesis; geranylgeranyl diphosphate from farnesyl diphosphate and isopentenyl diphosphate: step 1/1. Functionally, catalyzes the trans-addition of the three molecules of IPP onto DMAPP to form geranylgeranyl pyrophosphate. The chain is Geranylgeranyl pyrophosphate synthase, chloroplastic from Capsicum annuum (Capsicum pepper).